The chain runs to 478 residues: Putative malate transporter YflS (478 aa).

The next 12 membrane-spanning stretches (helical) occupy residues 12-31 (AVKL…IWFI), 41-57 (AWHL…GFIS), 64-81 (AIAI…TLSI), 96-118 (IVIA…ISYV), 187-209 (GFQG…PLIA), 222-244 (WTSW…PLVI), 277-296 (LSMV…GGSF), 300-319 (ATTT…VLTW), 332-354 (LTWF…VSWF), 364-386 (GFSW…YFFA), 398-420 (AFLA…LAFI), and 450-472 (WSIG…GLWW).

It belongs to the SLC13A/DASS transporter (TC 2.A.47) family. DIT1 subfamily.

The protein localises to the cell membrane. In terms of biological role, might be a malate transporter. The chain is Putative malate transporter YflS (yflS) from Bacillus subtilis (strain 168).